The chain runs to 60 residues: Large ribosomal subunit protein bL32 (60 aa).

2 disordered regions span residues 1 to 28 and 41 to 60; these read MAVQQNKKSPSKRGMHRSHNALALPGIA and HISPNGFYRGRQVLKPKSEA. Residues 9 to 19 show a composition bias toward basic residues; that stretch reads SPSKRGMHRSH.

It belongs to the bacterial ribosomal protein bL32 family.

The protein is Large ribosomal subunit protein bL32 of Verminephrobacter eiseniae (strain EF01-2).